The following is a 1090-amino-acid chain: UPF0507 protein SCY_4172 (1090 aa).

Positions 289–436 (FSVNQLLTDF…FEDFNKNTGN (148 aa)) constitute a VPS9 domain.

Belongs to the UPF0507 family.

The sequence is that of UPF0507 protein SCY_4172 from Saccharomyces cerevisiae (strain YJM789) (Baker's yeast).